The following is a 210-amino-acid chain: UPF0301 protein Mnod_6933 (210 aa).

It belongs to the UPF0301 (AlgH) family.

The sequence is that of UPF0301 protein Mnod_6933 from Methylobacterium nodulans (strain LMG 21967 / CNCM I-2342 / ORS 2060).